We begin with the raw amino-acid sequence, 151 residues long: Deoxyuridine 5'-triphosphate nucleotidohydrolase (151 aa).

Residues 70-72, N83, 87-89, and M97 contribute to the substrate site; these read RSG and LID.

This sequence belongs to the dUTPase family. Mg(2+) serves as cofactor.

It carries out the reaction dUTP + H2O = dUMP + diphosphate + H(+). It functions in the pathway pyrimidine metabolism; dUMP biosynthesis; dUMP from dCTP (dUTP route): step 2/2. This enzyme is involved in nucleotide metabolism: it produces dUMP, the immediate precursor of thymidine nucleotides and it decreases the intracellular concentration of dUTP so that uracil cannot be incorporated into DNA. This chain is Deoxyuridine 5'-triphosphate nucleotidohydrolase, found in Pseudomonas paraeruginosa (strain DSM 24068 / PA7) (Pseudomonas aeruginosa (strain PA7)).